Here is a 73-residue protein sequence, read N- to C-terminus: Kappa-scoloptoxin SsmTx-I (73 aa).

The N-terminal stretch at 1-25 is a signal peptide; the sequence is MMMMFSVVSVFLMLLLLKFHDLSMG. The propeptide occupies 26 to 37; sequence EEISLLKKVVRR. 2 cysteine pairs are disulfide-bonded: cysteine 45–cysteine 56 and cysteine 50–cysteine 63.

The protein belongs to the scoloptoxin-04 family. Expressed by the venom gland.

It localises to the secreted. In terms of biological role, exhibits highly specific blockage of Kv2.1/KCNB1 (IC(50)=41.7 nM) voltage-gated potassium channels. This blockage is not associated with a significant change in steady-state activation, suggesting that this toxin acts as a channel blocker rather than a gating-modifier. Shows potential analgesic activities in formalin-induced paw licking, thermal pain, and acetic acid-induced abdominal writhing mice models. The protein is Kappa-scoloptoxin SsmTx-I of Scolopendra mutilans (Chinese red-headed centipede).